The primary structure comprises 186 residues: TATA-box-binding protein E (186 aa).

2 tandem repeats follow at residues 10–86 (IENV…FDKL) and 101–179 (VQNI…TSRL).

Belongs to the TBP family.

In terms of biological role, general factor that plays a role in the activation of archaeal genes transcribed by RNA polymerase. Binds specifically to the TATA box promoter element which lies close to the position of transcription initiation. The sequence is that of TATA-box-binding protein E (tbpE) from Halobacterium salinarum (strain ATCC 700922 / JCM 11081 / NRC-1) (Halobacterium halobium).